Consider the following 131-residue polypeptide: Agouti-signaling protein (131 aa).

Residues 1 to 22 form the signal peptide; sequence MDVTRLLLATLVGFLCFLTVHS. N-linked (GlcNAc...) asparagine glycosylation is present at Asn39. A disordered region spans residues 58 to 96; it reads KSKKISRKEAEKRKRSSKKKASIKKVARPPPPSPCVATR. A compositionally biased stretch (basic residues) spans 70–84; the sequence is RKRSSKKKASIKKVA. Intrachain disulfides connect Cys92/Cys107, Cys99/Cys113, Cys106/Cys124, Cys110/Cys131, and Cys115/Cys122. The Agouti domain occupies 92 to 131; it reads CVATRDSCKPPAPACCNPCASCQCRFFGSACTCRVLNPNC.

It is found in the secreted. Its function is as follows. Involved in the regulation of melanogenesis. The binding of ASP to MC1R precludes alpha-MSH initiated signaling and thus blocks production of cAMP, leading to a down-regulation of eumelanogenesis (brown/black pigment) and thus increasing synthesis of pheomelanin (yellow/red pigment). The sequence is that of Agouti-signaling protein from Rattus norvegicus (Rat).